We begin with the raw amino-acid sequence, 380 residues long: Crotonobetainyl-CoA reductase (380 aa).

It belongs to the acyl-CoA dehydrogenase family. Homotetramer. The cofactor is FAD.

It is found in the cytoplasm. The enzyme catalyses 4-(trimethylamino)butanoyl-CoA + oxidized [electron-transfer flavoprotein] + H(+) = crotonobetainyl-CoA + reduced [electron-transfer flavoprotein]. It functions in the pathway amine and polyamine metabolism; carnitine metabolism. Functionally, catalyzes the reduction of crotonobetainyl-CoA to gamma-butyrobetainyl-CoA. In Salmonella agona (strain SL483), this protein is Crotonobetainyl-CoA reductase.